The sequence spans 615 residues: tRNA uridine 5-carboxymethylaminomethyl modification enzyme MnmG (615 aa).

11–16 (GLGHAG) lines the FAD pocket. An NAD(+)-binding site is contributed by 278–292 (GPRYCPSLEDKVVRF).

It belongs to the MnmG family. As to quaternary structure, homodimer. Heterotetramer of two MnmE and two MnmG subunits. The cofactor is FAD.

It localises to the cytoplasm. In terms of biological role, NAD-binding protein involved in the addition of a carboxymethylaminomethyl (cmnm) group at the wobble position (U34) of certain tRNAs, forming tRNA-cmnm(5)s(2)U34. This Myxococcus xanthus (strain DK1622) protein is tRNA uridine 5-carboxymethylaminomethyl modification enzyme MnmG.